The primary structure comprises 94 residues: Putative RNA-binding protein RbpD (94 aa).

The region spanning 2–79 (TIYVGNLSYR…RQLRVNKAKP (78 aa)) is the RRM domain. The disordered stretch occupies residues 73 to 94 (RVNKAKPREDDRRGSWGKKQDY). Residues 78 to 94 (KPREDDRRGSWGKKQDY) are compositionally biased toward basic and acidic residues.

This is Putative RNA-binding protein RbpD (rbpD) from Nostoc sp. (strain PCC 7120 / SAG 25.82 / UTEX 2576).